The following is a 562-amino-acid chain: MVLDKMIIFHLLLWLCNVVVHAAKVEILPAPQSVTWENDTAIIINPRLLQANTSCPLLEDAFVRTVSAIEKSKWHPFPIDDFNTANGKNIKTSLVHIQVDDATVDLQLGVNESYTLKINTDGINIHAATTWGALHGLVSLQQLIIHTSEDKYVVPSSVTISDFPNFKHRGLMIDSGRNFLTVDSILEQIDIMALSKMNSLHWHLADSQSWPVALESYPHMIKDAYSNDEVYSKNDLKYIVDYARARGVRVIPEIDMPGHARAGWKQVDPTIVECADAFWTDAAVEPPPGQLNIESEKTYEVISNVYNELSDIFIDDVFHVGNDELQEKCYSAQLSPNNTVTDLLKRYLKKALPIFNKVNHRKLTMWDDVLLSDVSADKIPSNITLQVWHEISGVKNLTSRGYDVVVSSSDFLYLDCGNAGWVTNDPRYVETPENVDFNTGQGGSWCGPYKSYQRIYNFDFTANLTETEKNHVLGREAALWSEQVDSTVLTTKIWPRTAALAELTWSGNKDSNGHHRGYEFTQRILNFREYLVKLGYGVSPLVPKYCLLNPHACDLYKNPPVY.

The N-terminal stretch at 1 to 22 is a signal peptide; the sequence is MVLDKMIIFHLLLWLCNVVVHA. 7 N-linked (GlcNAc...) asparagine glycosylation sites follow: asparagine 38, asparagine 52, asparagine 111, asparagine 337, asparagine 382, asparagine 396, and asparagine 463.

The protein belongs to the glycosyl hydrolase 20 family.

The catalysed reaction is Hydrolysis of terminal non-reducing N-acetyl-D-hexosamine residues in N-acetyl-beta-D-hexosaminides.. Functionally, has a broad substrate specificity. This chain is Beta-hexosaminidase (HEX1), found in Candida albicans (Yeast).